An 839-amino-acid polypeptide reads, in one-letter code: Amyloid-beta A4 precursor protein-binding family A member 1 (839 aa).

Disordered stretches follow at residues 1 to 118 (MNHL…DESA), 235 to 346 (RLHH…EKRD), and 362 to 437 (VKTR…ESRK). Residues 23 to 38 (ESVEADLEHPEVEEEQ) are compositionally biased toward acidic residues. At Ser-79 the chain carries Phosphoserine. 2 stretches are compositionally biased toward basic and acidic residues: residues 103-112 (DGYEAERAQD) and 237-255 (HHYD…KEAE). Positions 227–315 (YRQEALGARL…TPGGGHPDSP (89 aa)) are munc-18-1 binding. Phosphoserine occurs at positions 243, 247, 249, 264, 281, and 286. Position 306 is a phosphothreonine (Thr-306). Phosphoserine occurs at positions 314 and 369. Residue Thr-372 is modified to Phosphothreonine. The LIN-2/CASK binding stretch occupies residues 375–438 (EPKEPIWVMR…ASTNKESRKS (64 aa)). Over residues 389 to 400 (PTRDCDDQRPVD) the composition is skewed to basic and acidic residues. Residues 401-417 (GDSPSPGSSSPLGAESS) are compositionally biased toward low complexity. Residues Ser-403, Ser-405, Ser-410, and Ser-570 each carry the phosphoserine modification. A PID domain is found at 459–645 (DGIIFAANYL…LLNTQDMYND (187 aa)). The segment at 628–643 (LSQKEYSDLLNTQDMY) is autoinhibitory helix linker. PDZ domains lie at 658-744 (DVFI…IVRC) and 749-824 (TVLI…TMPA).

Part of a multimeric complex containing STXBP1 and STX1A. Interacts with STXBP1. Component of the brain-specific heterotrimeric complex (LIN-10-LIN-2-LIN-7 complex) composed of at least APBA1, CASK, and LIN7, which associates with the motor protein KIF17 to transport vesicles along microtubules. Within the complex, interacts (via PDZ domain) with the motor protein KIF17; the interaction is direct and is required for association of KIF17 with the cargo that is to be transported. Binds to the cytoplasmic domain of amyloid protein (APP). Interacts (via PDZ 1 and 2 domains) with FSPB. Isoform 2 interacts (via its truncated PID domain) with active, GTP-bound RAB6A and RAB6B. As to expression, brain. Detected in the cerebellum, hippocampus, olfactory system, piriform and entorhinal cortex, supraoptic nucleus of the hypothalamus, substantia nigra, and other mesencephalic areas.

The protein resides in the cytoplasm. The protein localises to the perinuclear region. Its subcellular location is the nucleus. It is found in the golgi apparatus. In terms of biological role, putative function in synaptic vesicle exocytosis by binding to Munc18-1, an essential component of the synaptic vesicle exocytotic machinery. May modulate processing of the amyloid-beta precursor protein (APP) and hence formation of APP-beta. This chain is Amyloid-beta A4 precursor protein-binding family A member 1 (Apba1), found in Rattus norvegicus (Rat).